The following is a 93-amino-acid chain: MKFLLGNINSTVLTMAGLRVLSSMIELTAAIVMLVTNDVRKAVVVNSILAIVGPLIFIITMTVGIYQIAGQLSYAKLILIFTGVVLILAGVHK.

Helical transmembrane passes span 15–35 (MAGLRVLSSMIELTAAIVMLV), 48–68 (ILAIVGPLIFIITMTVGIYQI), and 72–92 (LSYAKLILIFTGVVLILAGVH).

The protein localises to the cell membrane. This is an uncharacterized protein from Bacillus subtilis (strain 168).